Consider the following 352-residue polypeptide: tRNA uridine(34) hydroxylase (352 aa).

The 95-residue stretch at 146–240 (DNPDTLFVDM…YARKAREQGL (95 aa)) folds into the Rhodanese domain. Residue C200 is the Cysteine persulfide intermediate of the active site. Over residues 315–328 (ETEQRARRAGRENG) the composition is skewed to basic and acidic residues. The tract at residues 315-352 (ETEQRARRAGRENGAKIFNKSRHRLQDGLNSTSLQSVE) is disordered. Residues 342 to 352 (GLNSTSLQSVE) are compositionally biased toward polar residues.

Belongs to the TrhO family.

The catalysed reaction is uridine(34) in tRNA + AH2 + O2 = 5-hydroxyuridine(34) in tRNA + A + H2O. Catalyzes oxygen-dependent 5-hydroxyuridine (ho5U) modification at position 34 in tRNAs. The sequence is that of tRNA uridine(34) hydroxylase from Photorhabdus laumondii subsp. laumondii (strain DSM 15139 / CIP 105565 / TT01) (Photorhabdus luminescens subsp. laumondii).